The following is a 187-amino-acid chain: Bis(5'-nucleosyl)-tetraphosphatase, symmetrical (187 aa).

An HD domain is found at 18–132; it reads RYQHTIGVME…IFLADYIEPN (115 aa). H21 is an ADP binding site. H21, H50, and D51 together coordinate Fe cation. ADP is bound by residues 51 to 54, H83, 109 to 110, D127, R133, and 170 to 175; these read DYAK, HT, and PIYPDT. A Fe cation-binding site is contributed by D127.

It belongs to the Ap4A hydrolase YqeK family. As to quaternary structure, homodimer.

It carries out the reaction P(1),P(4)-bis(5'-adenosyl) tetraphosphate + H2O = 2 ADP + 2 H(+). Functionally, hydrolyzes diadenosine 5',5'''-P1,P4-tetraphosphate (Ap4A) to yield ADP. The chain is Bis(5'-nucleosyl)-tetraphosphatase, symmetrical from Halalkalibacterium halodurans (strain ATCC BAA-125 / DSM 18197 / FERM 7344 / JCM 9153 / C-125) (Bacillus halodurans).